Reading from the N-terminus, the 138-residue chain is Small ribosomal subunit protein uS11c (138 aa).

The protein belongs to the universal ribosomal protein uS11 family. In terms of assembly, part of the 30S ribosomal subunit.

Its subcellular location is the plastid. The protein resides in the chloroplast. The sequence is that of Small ribosomal subunit protein uS11c from Phalaenopsis aphrodite subsp. formosana (Moth orchid).